A 699-amino-acid polypeptide reads, in one-letter code: Elongation factor G (699 aa).

Positions 8–283 (EHIRNIGICA…AVVYFLPSPI (276 aa)) constitute a tr-type G domain. GTP-binding positions include 17-24 (AHIDAGKT), 81-85 (DTPGH), and 135-138 (NKMD).

It belongs to the TRAFAC class translation factor GTPase superfamily. Classic translation factor GTPase family. EF-G/EF-2 subfamily.

The protein resides in the cytoplasm. Functionally, catalyzes the GTP-dependent ribosomal translocation step during translation elongation. During this step, the ribosome changes from the pre-translocational (PRE) to the post-translocational (POST) state as the newly formed A-site-bound peptidyl-tRNA and P-site-bound deacylated tRNA move to the P and E sites, respectively. Catalyzes the coordinated movement of the two tRNA molecules, the mRNA and conformational changes in the ribosome. This is Elongation factor G from Rickettsia akari (strain Hartford).